The sequence spans 535 residues: MNGKSFLDSSSTKILQDLAVAPIDLTSPGIISKERIERFSLFVEGFTFSYAMERVDDGILSALTGLASERGLLASMKAMQNGEVVNYIDNFPSESRPALHTATRAWVRGISLTGNAEDISLRSKIEVQRLRDFLNKYRDAFTTIVQIGIGGSELGPKALHCALKGCCPSDKKVYFVSNVDPDNAAEVLQEIDCSKTLVVTVSKSGTTLETAVNEELFADHFLKQGLSFRDHFIAVTCEGSPMDDTTRYLEVFHIWDSIGGRFSSTSMVGGVVLGFAYGFDAFIQLLEGAAAMDLVALEPHMSENLPMLSAMLGIWNRNFLRYPTTAVIPYSMGLEYFPAHLQQCGMESNGKSVAQTGELIGFSTSPILWGELGTNSQHSFFQALHQGSDIVPVEFIGFLRNQRGRDIEISGSSSSQKLFANMIAQSIALAKGRENVNPNKNFKGNRPSSLLVSERLTPYTMGALLAFYEHKIVFQGFCWGINSFDQEGVTLGKDLANQVLRIMQGQQGGDNVVIEAEALLGLFDKNKKLKEFGEA.

Glutamate 347 acts as the Proton donor in catalysis. Active-site residues include histidine 378 and lysine 493.

This sequence belongs to the GPI family.

Its subcellular location is the cytoplasm. The catalysed reaction is alpha-D-glucose 6-phosphate = beta-D-fructose 6-phosphate. It functions in the pathway carbohydrate biosynthesis; gluconeogenesis. It participates in carbohydrate degradation; glycolysis; D-glyceraldehyde 3-phosphate and glycerone phosphate from D-glucose: step 2/4. In terms of biological role, catalyzes the reversible isomerization of glucose-6-phosphate to fructose-6-phosphate. This chain is Glucose-6-phosphate isomerase, found in Chlamydia felis (strain Fe/C-56) (Chlamydophila felis).